The following is a 128-amino-acid chain: NADH-quinone oxidoreductase subunit A (128 aa).

A run of 3 helical transmembrane segments spans residues 12–32 (FAIFIISAIILCVLILTLSFL), 66–86 (FYLIAIFFVLFDIEAFYLYAW), and 96–116 (LGFYEAIIFVSVLLSGLVYLV).

It belongs to the complex I subunit 3 family. NDH-1 is composed of 14 different subunits. Subunits NuoA, H, J, K, L, M, N constitute the membrane sector of the complex.

It is found in the cell membrane. It carries out the reaction a quinone + NADH + 5 H(+)(in) = a quinol + NAD(+) + 4 H(+)(out). Functionally, NDH-1 shuttles electrons from NADH, via FMN and iron-sulfur (Fe-S) centers, to quinones in the respiratory chain. The immediate electron acceptor for the enzyme in this species is believed to be ubiquinone. Couples the redox reaction to proton translocation (for every two electrons transferred, four hydrogen ions are translocated across the cytoplasmic membrane), and thus conserves the redox energy in a proton gradient. The sequence is that of NADH-quinone oxidoreductase subunit A from Baumannia cicadellinicola subsp. Homalodisca coagulata.